The primary structure comprises 88 residues: ATP synthase F(0) complex subunit f, mitochondrial (88 aa).

Position 2 is an N-acetylalanine (Ala-2). Ser-3 carries the post-translational modification Phosphoserine. Lys-16 is modified (N6-acetyllysine). Residues 62 to 79 (MVLAAYVVFSYCISYKEL) traverse the membrane as a helical segment.

The protein belongs to the ATPase F chain family. In terms of assembly, component of the ATP synthase complex composed at least of ATP5F1A/subunit alpha, ATP5F1B/subunit beta, ATP5MC1/subunit c (homooctomer), MT-ATP6/subunit a, MT-ATP8/subunit 8, ATP5ME/subunit e, ATP5MF/subunit f, ATP5MG/subunit g, ATP5MK/subunit k, ATP5MJ/subunit j, ATP5F1C/subunit gamma, ATP5F1D/subunit delta, ATP5F1E/subunit epsilon, ATP5PF/subunit F6, ATP5PB/subunit b, ATP5PD/subunit d, ATP5PO/subunit OSCP. ATP synthase complex consists of a soluble F(1) head domain (subunits alpha(3) and beta(3)) - the catalytic core - and a membrane F(0) domain - the membrane proton channel (subunits c, a, 8, e, f, g, k and j). These two domains are linked by a central stalk (subunits gamma, delta, and epsilon) rotating inside the F1 region and a stationary peripheral stalk (subunits F6, b, d, and OSCP).

Its subcellular location is the mitochondrion. The protein resides in the mitochondrion inner membrane. Subunit f, of the mitochondrial membrane ATP synthase complex (F(1)F(0) ATP synthase or Complex V) that produces ATP from ADP in the presence of a proton gradient across the membrane which is generated by electron transport complexes of the respiratory chain. ATP synthase complex consist of a soluble F(1) head domain - the catalytic core - and a membrane F(1) domain - the membrane proton channel. These two domains are linked by a central stalk rotating inside the F(1) region and a stationary peripheral stalk. During catalysis, ATP synthesis in the catalytic domain of F(1) is coupled via a rotary mechanism of the central stalk subunits to proton translocation. In vivo, can only synthesize ATP although its ATP hydrolase activity can be activated artificially in vitro. Part of the complex F(0) domain. This chain is ATP synthase F(0) complex subunit f, mitochondrial, found in Mus musculus (Mouse).